The primary structure comprises 303 residues: uncharacterized protein (303 aa).

Residues 7–12 (GAGGVG) and asparagine 101 each bind NADP(+). Lysine 184 (proton donor) is an active-site residue. NADP(+) is bound at residue glutamate 267.

The protein belongs to the ketopantoate reductase family.

This is an uncharacterized protein from Bacillus subtilis (strain 168).